The primary structure comprises 438 residues: 5-methylthioadenosine/S-adenosylhomocysteine deaminase (438 aa).

Residues H66 and H68 each contribute to the Zn(2+) site. E95, R148, and H188 together coordinate substrate. H215 serves as a coordination point for Zn(2+). E218 and D305 together coordinate substrate. Residue D305 coordinates Zn(2+).

It belongs to the metallo-dependent hydrolases superfamily. MTA/SAH deaminase family. It depends on Zn(2+) as a cofactor.

The catalysed reaction is S-adenosyl-L-homocysteine + H2O + H(+) = S-inosyl-L-homocysteine + NH4(+). It carries out the reaction S-methyl-5'-thioadenosine + H2O + H(+) = S-methyl-5'-thioinosine + NH4(+). Its function is as follows. Catalyzes the deamination of 5-methylthioadenosine and S-adenosyl-L-homocysteine into 5-methylthioinosine and S-inosyl-L-homocysteine, respectively. Is also able to deaminate adenosine. In Halalkalibacterium halodurans (strain ATCC BAA-125 / DSM 18197 / FERM 7344 / JCM 9153 / C-125) (Bacillus halodurans), this protein is 5-methylthioadenosine/S-adenosylhomocysteine deaminase.